A 347-amino-acid chain; its full sequence is Virulence plasmid protein pGP2-D (347 aa).

The chain is Virulence plasmid protein pGP2-D from Chlamydia psittaci (Chlamydophila psittaci).